Here is a 633-residue protein sequence, read N- to C-terminus: Probable potassium transport system protein Kup (633 aa).

Transmembrane regions (helical) follow at residues 21–41 (MLVA…LYTL), 61–81 (ILSL…MMFV), 112–132 (LLVV…MITP), 149–169 (GIDH…FLIQ), 176–196 (IGIL…ALGV), 217–237 (FFMV…LALT), 258–278 (WFLL…ALLL), 290–310 (LLAP…ATVI), 348–368 (IYIG…VIGF), 377–397 (AYGV…SAVM), 398–418 (LLLW…FLLV), and 430–450 (IVQG…LMTT).

The protein belongs to the HAK/KUP transporter (TC 2.A.72) family.

The protein localises to the cell inner membrane. The catalysed reaction is K(+)(in) + H(+)(in) = K(+)(out) + H(+)(out). Functionally, transport of potassium into the cell. Likely operates as a K(+):H(+) symporter. In Pseudomonas fluorescens (strain Pf0-1), this protein is Probable potassium transport system protein Kup.